Consider the following 126-residue polypeptide: Aspartate 1-decarboxylase (126 aa).

The Schiff-base intermediate with substrate; via pyruvic acid role is filled by serine 25. Serine 25 carries the post-translational modification Pyruvic acid (Ser). Position 57 (threonine 57) interacts with substrate. Tyrosine 58 acts as the Proton donor in catalysis. 73 to 75 (GAA) is a substrate binding site.

This sequence belongs to the PanD family. As to quaternary structure, heterooctamer of four alpha and four beta subunits. Pyruvate serves as cofactor. Is synthesized initially as an inactive proenzyme, which is activated by self-cleavage at a specific serine bond to produce a beta-subunit with a hydroxyl group at its C-terminus and an alpha-subunit with a pyruvoyl group at its N-terminus.

It is found in the cytoplasm. It carries out the reaction L-aspartate + H(+) = beta-alanine + CO2. It functions in the pathway cofactor biosynthesis; (R)-pantothenate biosynthesis; beta-alanine from L-aspartate: step 1/1. In terms of biological role, catalyzes the pyruvoyl-dependent decarboxylation of aspartate to produce beta-alanine. This chain is Aspartate 1-decarboxylase, found in Salmonella choleraesuis (strain SC-B67).